We begin with the raw amino-acid sequence, 108 residues long: uncharacterized protein (108 aa).

Residues 39–68 (GLRSRSGTGSGNSRNGLKESGGSRSGPGKP) show a composition bias toward low complexity. The segment at 39–95 (GLRSRSGTGSGNSRNGLKESGGSRSGPGKPRGNRKSSRRIRPRPTSEKPRGYWRSSW) is disordered. The span at 69–80 (RGNRKSSRRIRP) shows a compositional bias: basic residues.

This is an uncharacterized protein from Acidithiobacillus ferridurans.